Consider the following 177-residue polypeptide: Large ribosomal subunit protein uL10 (177 aa).

This sequence belongs to the universal ribosomal protein uL10 family. As to quaternary structure, part of the ribosomal stalk of the 50S ribosomal subunit. The N-terminus interacts with L11 and the large rRNA to form the base of the stalk. The C-terminus forms an elongated spine to which L12 dimers bind in a sequential fashion forming a multimeric L10(L12)X complex.

Functionally, forms part of the ribosomal stalk, playing a central role in the interaction of the ribosome with GTP-bound translation factors. This chain is Large ribosomal subunit protein uL10, found in Caldanaerobacter subterraneus subsp. tengcongensis (strain DSM 15242 / JCM 11007 / NBRC 100824 / MB4) (Thermoanaerobacter tengcongensis).